Reading from the N-terminus, the 327-residue chain is HTH-type transcriptional regulator EbgR (327 aa).

Positions 1–57 constitute an HTH lacI-type domain; sequence MATLKDIAIEAGVSLATVSRVLNDDPTLNVKEETKHRILEIAEKLEYKTSSARKLQT. The segment at residues 4–23 is a DNA-binding region (H-T-H motif); it reads LKDIAIEAGVSLATVSRVLN.

Functionally, repressor for beta galactosidase alpha and beta subunits (ebgA and ebgC). Binds lactose as an inducer. The chain is HTH-type transcriptional regulator EbgR (ebgR) from Escherichia coli (strain K12).